We begin with the raw amino-acid sequence, 60 residues long: UI (60 aa).

Positions 1–14 are enriched in low complexity; the sequence is AAAAGDSAASDLLG. The segment at 1-22 is disordered; it reads AAAAGDSAASDLLGDNILRSED. Val60 is modified (valine amide).

This sequence belongs to the sauvagine/corticotropin-releasing factor/urotensin I family.

The protein localises to the secreted. Its function is as follows. Urotensin is found in the teleost caudal neurosecretory system. It has a suggested role in osmoregulation and as a corticotropin-releasing factor. The non-hormonal portion of this precursor may be a urotensin binding protein, urophysin. The protein is UI of Platichthys flesus (European flounder).